A 258-amino-acid chain; its full sequence is Acetylglutamate kinase (258 aa).

Substrate contacts are provided by residues 41 to 42, R63, and N156; that span reads GG.

This sequence belongs to the acetylglutamate kinase family. ArgB subfamily.

It is found in the cytoplasm. The catalysed reaction is N-acetyl-L-glutamate + ATP = N-acetyl-L-glutamyl 5-phosphate + ADP. Its pathway is amino-acid biosynthesis; L-arginine biosynthesis; N(2)-acetyl-L-ornithine from L-glutamate: step 2/4. Its function is as follows. Catalyzes the ATP-dependent phosphorylation of N-acetyl-L-glutamate. The protein is Acetylglutamate kinase of Bacillus licheniformis (strain ATCC 14580 / DSM 13 / JCM 2505 / CCUG 7422 / NBRC 12200 / NCIMB 9375 / NCTC 10341 / NRRL NRS-1264 / Gibson 46).